We begin with the raw amino-acid sequence, 346 residues long: Pyrophosphate--fructose 6-phosphate 1-phosphotransferase (346 aa).

G13 contacts diphosphate. Residue E105 participates in Mg(2+) binding. Residues 127 to 129 (TID), R164, 171 to 173 (MGR), E224, R269, and 275 to 278 (HLQR) each bind substrate. Catalysis depends on D129, which acts as the Proton acceptor.

The protein belongs to the phosphofructokinase type A (PFKA) family. Mixed-substrate PFK group III subfamily. As to quaternary structure, homodimer. Mg(2+) serves as cofactor.

It is found in the cytoplasm. The enzyme catalyses beta-D-fructose 6-phosphate + diphosphate = beta-D-fructose 1,6-bisphosphate + phosphate + H(+). It functions in the pathway carbohydrate degradation; glycolysis; D-glyceraldehyde 3-phosphate and glycerone phosphate from D-glucose: step 3/4. With respect to regulation, non-allosteric. Its function is as follows. Catalyzes the phosphorylation of D-fructose 6-phosphate, the first committing step of glycolysis. Uses inorganic phosphate (PPi) as phosphoryl donor instead of ATP like common ATP-dependent phosphofructokinases (ATP-PFKs), which renders the reaction reversible, and can thus function both in glycolysis and gluconeogenesis. Consistently, PPi-PFK can replace the enzymes of both the forward (ATP-PFK) and reverse (fructose-bisphosphatase (FBPase)) reactions. This chain is Pyrophosphate--fructose 6-phosphate 1-phosphotransferase, found in Dictyoglomus thermophilum.